Here is a 311-residue protein sequence, read N- to C-terminus: Retron Ec78 reverse transcriptase (311 aa).

A Reverse transcriptase domain is found at 15–241 (DSGISAFLVT…HNRHVTGVTI (227 aa)). Mg(2+) contacts are provided by aspartate 96, aspartate 187, and aspartate 188.

The protein belongs to the bacterial reverse transcriptase family.

The enzyme catalyses DNA(n) + a 2'-deoxyribonucleoside 5'-triphosphate = DNA(n+1) + diphosphate. Reverse transcriptase (RT) component of antiviral defense system retron Ec78, composed of a non-coding RNA (ncRNA), this reverse transcriptase (RT), a probable ATPase and a putative HNH endonuclease. Expression of retron Ec78 confers protection against bacteriophage T5. At multiplicity of infection (MOI) of 0.02 cultures slow growth when infected with T5 but do not collapse, at MOI 2 cultures enter growth stasis. Responsible for synthesis of msDNA-Ec78 (a linear ssDNA with a 5'-terminal phosphate residue). Unlike most known msDNAs the mature product does not have an RNA component. The retron transcript serves as primer and template for the reaction, and codes for the RT. Not mutagenic when cloned in E.coli. It is thought to be synthesized as a branched RNA with a 2',5'-phosphodiester linkage to ssDNA; the linkage is cleaved endonucleolytically by ExoVII (xseA-xseB) leaving the observed mature 5'-ssDNA terminus. Overexpression of the ncRNA and RT, which leads to increased levels of msDNA, is not mutagenic in vivo. As the stem in the msDNA does not have a mismatch it probably does not bind or sequester MutS and/or MutL. In Escherichia coli, this protein is Retron Ec78 reverse transcriptase.